The chain runs to 331 residues: Gamma-parvin (331 aa).

Residue M1 is modified to N-acetylmethionine. Positions 17 to 39 are disordered; it reads EPPAEEELSKGGKKKYLPPTSRK. 2 consecutive Calponin-homology (CH) domains span residues 44–151 and 210–317; these read EELQ…KRFQ and NAVK…CKHT.

This sequence belongs to the parvin family. As to quaternary structure, interacts with ILK; the interaction promotes the establishment of cell polarity required for leukocyte migration. Interacts with ARHGEF6; the guanine nucleotide exchange factor activity of ARHGEF6 is essential for the PARVG-induced enhancement of cell spreading. As to expression, expressed predominantly in lymphoid organs, including spleen, thymus, lymph node, bone marrow and peripheral blood leukocytes and moderately in the digestive tract, including stomach, duodenum, jejunum, ileum, ileocecum and appendix, as well as in lung and liver. Also expressed in tumors, but at a lower level than in the corresponding normal tissues.

It is found in the cell junction. The protein resides in the focal adhesion. The protein localises to the cell membrane. Its subcellular location is the cytoplasm. It localises to the cytoskeleton. Functionally, plays a role with ILK in promoting the cell adhesion and spreading of leukocytes. This is Gamma-parvin (PARVG) from Homo sapiens (Human).